The primary structure comprises 249 residues: Large ribosomal subunit protein uL10m (249 aa).

Residues 1–31 (MLQLRFMPGWVPRNGFFGLKETIGTVHKRFY) constitute a mitochondrion transit peptide. Positions 226 to 249 (SHNDNQKPKEDVESTTDAESKGSK) are disordered.

The protein belongs to the universal ribosomal protein uL10 family. As to quaternary structure, component of the mitochondrial large ribosomal subunit (mt-LSU). Mature yeast 74S mitochondrial ribosomes consist of a small (37S) and a large (54S) subunit. The 37S small subunit contains a 15S ribosomal RNA (15S mt-rRNA) and 34 different proteins. The 54S large subunit contains a 21S rRNA (21S mt-rRNA) and 46 different proteins.

Its subcellular location is the mitochondrion. Functionally, component of the mitochondrial ribosome (mitoribosome), a dedicated translation machinery responsible for the synthesis of mitochondrial genome-encoded proteins, including at least some of the essential transmembrane subunits of the mitochondrial respiratory chain. The mitoribosomes are attached to the mitochondrial inner membrane and translation products are cotranslationally integrated into the membrane. This Saccharomyces cerevisiae (strain ATCC 204508 / S288c) (Baker's yeast) protein is Large ribosomal subunit protein uL10m (MRPL11).